A 3476-amino-acid chain; its full sequence is Abnormal spindle-like microcephaly-associated protein homolog (3476 aa).

The segment at 1-34 is disordered; it reads MANRRVGRGCWEVSPTERRPPAGLRGPATEEEAS. Ser-280, Ser-283, Ser-367, Ser-392, Ser-425, and Ser-605 each carry phosphoserine. One can recognise a Calponin-homology (CH) 1 domain in the interval 920–1056; the sequence is KASKEILLAF…LLWKIAFAFQ (137 aa). Positions 1057 to 1078 form a coiled coil; sequence VDISLNLDQLKEEIAFLKHTKS. Phosphoserine is present on Ser-1103. The Calponin-homology (CH) 2 domain maps to 1110-1261; it reads SENIKLLMDW…YLSFLCARLL (152 aa). 38 consecutive IQ domains span residues 1347–1378, 1393–1422, 1582–1613, 1605–1634, 1632–1661, 1655–1684, 1728–1757, 1751–1782, 1801–1830, 1824–1853, 1874–1903, 1897–1928, 1947–1978, 1970–2001, 2020–2049, 2043–2074, 2093–2124, 2116–2147, 2239–2270, 2262–2293, 2311–2342, 2334–2365, 2384–2415, 2407–2438, 2457–2488, 2530–2561, 2624–2653, 2665–2696, 2688–2719, 2738–2767, 2814–2845, 2859–2890, 2909–2938, 2932–2963, 2954–2985, 3029–3060, 3079–3110, and 3203–3234; these read QNKAASLIQGYWRRYSTRKRFLKLKYYSIILQ, YLWATVTIQRHWRAYLRRKQDQQRYEMLKS, LKKTIIKLQAHIRKHQQVQKYKKMKKAAVIIQ, MKKAAVIIQTHFRAYIFTRKVLASYQKTRS, TRSAVIVLQSAYRGMQARKVYIHILTSVIK, ILTSVIKIQSYYRAYVSKKEFLSLKNTTIK, MRESCIKLQAFVRGYLVRKQMRLQRKAVIS, QRKAVISLQSYFRMRKARQYYLKMCKAIIVIQ, VKKAATCLQAAYRGYKVRQLIKQQSIAALK, QSIAALKIQSAFRGYNKRVKYQSVLQSIIK, TKAAVVSLQSAYRGWKVRKQIRREHQAALK, EHQAALKIQSAFRMAKAQKQFRLFKTAALVIQ, LRHAVLILQSMWKGKTLRRQLQRQXKCAIIIQ, QXKCAIIIQSYYRMHVQQKKWKIMKKAALLIQ, TKAAVVTLQSAYRGMKVRKRIKDCNKAAVT, CNKAAVTIQSKYRAYKTKKKYATYRASAIIIQ, LKKTAIKIQSVYRGIRVRRHIQHMHRAATFIK, MHRAATFIKAMFKMHQSRISYHTMRKAAIVIQ, LRHSVIYIQAIFRGKKARRHLKMMHVAATLIQ, MHVAATLIQRRFRTLMMRRRFLSLKKTAVWIQ, VQNAVIKIQSSYRRWMIRKKMREMHRAATFIQ, MHRAATFIQATFRMHRVHMRYQALKQASVVIQ, QRRSAVILQAAFRGVKTRRHLKSMHSSATLIQ, MHSSATLIQSRFRSLLVRRRFISLKKATIFVQ, LRKAAITIQSSYRRLMVKKKLQEMQRAAVLIQ, QWHSAVVIQTAYKGMKARQHLREKHKAAIIIQ, QHQAAIIIQKHCKAFKIRKHYLHLRATVVS, RTQAVICIQSYYRGFKVRRDIQNMHRAATLIQ, MHRAATLIQSFYRMHRAKVDYQTKKTAIVVIQ, VQKSVRTIQAAFRGMKVRQKLKIVSEEKMA, QSRAAVTIQNAFRRMVTRKLETQKCAALRIQF, QKRAAITLQHYFRTWQTRKQFLLYRKAAVVLQ, IRSSVIIIQARSKGFIQKRKFQEIKNSTIK, IKNSTIKIQAMWRRYRAKKYLCKVKAACKIQA, KVKAACKIQAWYRCWRAHKEYLAILKAVKIIQ, RHRAACLIQAHYRGYKERQVFLRQKSAALIIQ, FKKSTVILQALVRGWLVRKRILEQKTKIRLLH, and FTSGIIKIQALWRGYSWRKKNDCTKIKAIRLS.

It localises to the cytoplasm. It is found in the cytoskeleton. The protein localises to the spindle. The protein resides in the nucleus. In terms of biological role, probable role in mitotic spindle regulation and coordination of mitotic processes. May have a preferential role in regulating neurogenesis. In Macaca fascicularis (Crab-eating macaque), this protein is Abnormal spindle-like microcephaly-associated protein homolog (ASPM).